A 335-amino-acid chain; its full sequence is MGPLSAPPCTQHITWKGLLLTASLLNFWNLPITAQVTIEALPPKVSEGKDVLLLVHNLPQNLAGYIWYKGQLMDLYHYITSYVVDGQINIYGPAYTGRETVYSNASLLIQNVTREDAGSYTLHIIKRGDRTRGVTGYFTFNLYLKLPKPYITINNSKPRENKDVLAFTCEPKSENYTYIWWLNGQSLPVSPRVKRPIENRILILPSVTRNETGPYECEIRDRDGGMRSDPVTLNVLYGPDLPSIYPSFTYYRSGENLYLSCFAESNPPAEYFWTINGKFQQSGQKLSIPQITTKHRGLYTCSVRNSATGKESSKSMTVEVSAPSGIGRLPLLNPI.

A signal peptide spans 1 to 34 (MGPLSAPPCTQHITWKGLLLTASLLNFWNLPITA). Residues 35–144 (QVTIEALPPK…TGYFTFNLYL (110 aa)) enclose the Ig-like V-type domain. Residues N104 and N111 are each glycosylated (N-linked (GlcNAc...) asparagine). The Cell attachment site signature appears at 127–129 (RGD). 2 consecutive Ig-like C2-type domains span residues 147–234 (PKPY…VTLN) and 239–317 (PDLP…KSMT). Cystine bridges form between C169–C217 and C261–C301. N-linked (GlcNAc...) asparagine glycans are attached at residues N175 and N210.

Belongs to the immunoglobulin superfamily. CEA family. As to expression, synthesized by syncytiotrophoblast of the placenta.

It is found in the secreted. The protein is Pregnancy-specific beta-1-glycoprotein 5 (PSG5) of Homo sapiens (Human).